The chain runs to 345 residues: UDP-N-acetylenolpyruvoylglucosamine reductase (345 aa).

One can recognise an FAD-binding PCMH-type domain in the interval 59-254 (VGGPAACLAR…RKATQPLGRP (196 aa)). Residue arginine 209 is part of the active site. The active-site Proton donor is cysteine 258. Glutamate 328 is an active-site residue.

Belongs to the MurB family. It depends on FAD as a cofactor.

The protein localises to the cytoplasm. It catalyses the reaction UDP-N-acetyl-alpha-D-muramate + NADP(+) = UDP-N-acetyl-3-O-(1-carboxyvinyl)-alpha-D-glucosamine + NADPH + H(+). It functions in the pathway cell wall biogenesis; peptidoglycan biosynthesis. Cell wall formation. The protein is UDP-N-acetylenolpyruvoylglucosamine reductase of Syntrophobacter fumaroxidans (strain DSM 10017 / MPOB).